A 248-amino-acid chain; its full sequence is tRNA pseudouridine synthase A (248 aa).

Aspartate 52 serves as the catalytic Nucleophile. Tyrosine 113 contributes to the substrate binding site.

The protein belongs to the tRNA pseudouridine synthase TruA family. Homodimer.

The enzyme catalyses uridine(38/39/40) in tRNA = pseudouridine(38/39/40) in tRNA. Functionally, formation of pseudouridine at positions 38, 39 and 40 in the anticodon stem and loop of transfer RNAs. This Mesorhizobium japonicum (strain LMG 29417 / CECT 9101 / MAFF 303099) (Mesorhizobium loti (strain MAFF 303099)) protein is tRNA pseudouridine synthase A.